Here is a 548-residue protein sequence, read N- to C-terminus: Solute carrier family 22 member 7 (548 aa).

A helical membrane pass occupies residues 21-41; that stretch reads VALLALPRVLLPLHFLLPIFL. N-linked (GlcNAc...) asparagine glycosylation occurs at N91. Transmembrane regions (helical) follow at residues 146-166, 180-200, 204-224, 234-254, 259-279, 346-366, 376-397, 404-423, 432-452, 466-486, and 493-513; these read AAST…GYLS, VSTL…MFAI, LTGS…LEWL, VLSS…GYLI, WLLL…WWVP, ISLC…GLSL, YQTQ…YLSV, LTQA…RLLV, TVLA…AYLF, MGLT…AALL, and LPKL…LLLP. The active-site Important for glutamate counteranion efflux is the F441. The segment at 522–548 is disordered; it reads ETIQDVERKSAPTSLQEEEMPMKQVQN.

The protein belongs to the major facilitator (TC 2.A.1) superfamily. Organic cation transporter (TC 2.A.1.19) family. Mainly expressed in liver and kidney. In kidney, expressed in proximal tubular cells. Also expressed in pancreas, small intestine, spinal cord, lung, brain and heart. Expressed in fetal liver.

Its subcellular location is the basolateral cell membrane. The protein resides in the apical cell membrane. The protein localises to the cell membrane. It localises to the cytoplasm. It is found in the cytosol. It carries out the reaction orotate(out) + L-glutamate(in) = orotate(in) + L-glutamate(out). The catalysed reaction is 3',5'-cyclic GMP(in) = 3',5'-cyclic GMP(out). The enzyme catalyses GMP(in) = GMP(out). It catalyses the reaction 2'-deoxyguanosine(in) = 2'-deoxyguanosine(out). It carries out the reaction GDP(in) = GDP(out). The catalysed reaction is guanosine(in) = guanosine(out). The enzyme catalyses GTP(in) = GTP(out). It catalyses the reaction 3',5'-cyclic AMP(in) = 3',5'-cyclic AMP(out). It carries out the reaction creatinine(in) = creatinine(out). The catalysed reaction is prostaglandin E2(out) = prostaglandin E2(in). The enzyme catalyses 2-oxoglutarate(in) = 2-oxoglutarate(out). It catalyses the reaction glutarate(in) = glutarate(out). It carries out the reaction urate(out) = urate(in). The catalysed reaction is estrone 3-sulfate(out) = estrone 3-sulfate(in). The enzyme catalyses prostaglandin F2alpha(out) = prostaglandin F2alpha(in). Functions as a Na(+)-independent bidirectional multispecific transporter. Contributes to the renal and hepatic elimination of endogenous organic compounds from the systemic circulation into the urine and bile, respectively. Capable of transporting a wide range of purine and pyrimidine nucleobases, nucleosides and nucleotides, with cGMP, 2'deoxyguanosine and GMP being the preferred substrates. Functions as a pH- and chloride-independent cGMP bidirectional facilitative transporter that can regulate both intracellular and extracellular levels of cGMP and may be involved in cGMP signaling pathways. Mediates orotate/glutamate bidirectional exchange and most likely display a physiological role in hepatic release of glutamate into the blood. Involved in renal secretion and possible reabsorption of creatinine. Able to uptake prostaglandin E2 (PGE2) and may contribute to PGE2 renal excretion. Also transports alpha-ketoglutarate and urate. Apart from the orotate/glutamate exchange, the counterions for the uptake of other SLC22A7/OAT2 substrates remain to be identified. Functionally, non functional transporter. In terms of biological role, involved in the uptake of prostaglandin F2-alpha (PGF2-alpha). In Homo sapiens (Human), this protein is Solute carrier family 22 member 7.